A 327-amino-acid chain; its full sequence is 2-methoxy-6-polyprenyl-1,4-benzoquinol methylase, mitochondrial (327 aa).

The N-terminal 43 residues, 1 to 43, are a transit peptide targeting the mitochondrion; that stretch reads MAAPIRAFVLRVLSDSTRNIHHVLRCRSKYLCRRAAITARRGY. S-adenosyl-L-methionine-binding positions include Thr117, Asp171, and 199 to 200; that span reads DA.

This sequence belongs to the class I-like SAM-binding methyltransferase superfamily. MenG/UbiE family. As to quaternary structure, component of a multi-subunit COQ enzyme complex, composed of at least coq3, coq4, coq5, coq6, coq7 and coq9.

Its subcellular location is the mitochondrion inner membrane. It carries out the reaction a 2-methoxy-6-(all-trans-polyprenyl)benzene-1,4-diol + S-adenosyl-L-methionine = a 5-methoxy-2-methyl-3-(all-trans-polyprenyl)benzene-1,4-diol + S-adenosyl-L-homocysteine + H(+). The protein operates within cofactor biosynthesis; ubiquinone biosynthesis. In terms of biological role, methyltransferase required for the conversion of 2-polyprenyl-6-methoxy-1,4-benzoquinol (DDMQH2) to 2-polyprenyl-3-methyl-6-methoxy-1,4-benzoquinol (DMQH2). In Danio rerio (Zebrafish), this protein is 2-methoxy-6-polyprenyl-1,4-benzoquinol methylase, mitochondrial.